A 205-amino-acid polypeptide reads, in one-letter code: Probable GTP-binding protein EngB (205 aa).

Positions Asn25–Lys199 constitute an EngB-type G domain. Residues Gly33–Ser40, Gly60–Leu64, Asp78–Gly81, Thr145–Asp148, and Phe178–Ser180 each bind GTP. 2 residues coordinate Mg(2+): Ser40 and Thr62.

Belongs to the TRAFAC class TrmE-Era-EngA-EngB-Septin-like GTPase superfamily. EngB GTPase family. Mg(2+) is required as a cofactor.

Necessary for normal cell division and for the maintenance of normal septation. This Buchnera aphidicola subsp. Acyrthosiphon pisum (strain 5A) protein is Probable GTP-binding protein EngB.